Consider the following 445-residue polypeptide: Anthranilate N-benzoyltransferase protein 1 (445 aa).

Active-site proton acceptor residues include H164 and D392.

Belongs to the plant acyltransferase family. N-terminus is blocked.

It carries out the reaction anthranilate + benzoyl-CoA = N-benzoylanthranilate + CoA. Its pathway is phytoalexin biosynthesis; methoxydianthramide B biosynthesis. Its function is as follows. Catalyzes the formation of N-benzoylanthranilate, in the course of methoxydianthramide B, a phytoalexin. Phytoalexins are produced in response to infection by parasites, and are essential for the expression of disease resistance. The polypeptide is Anthranilate N-benzoyltransferase protein 1 (HCBT1) (Dianthus caryophyllus (Carnation)).